The following is a 423-amino-acid chain: Glutamate-1-semialdehyde 2,1-aminomutase (423 aa).

Lysine 266 is modified (N6-(pyridoxal phosphate)lysine).

Belongs to the class-III pyridoxal-phosphate-dependent aminotransferase family. HemL subfamily. As to quaternary structure, homodimer. It depends on pyridoxal 5'-phosphate as a cofactor.

It localises to the cytoplasm. The catalysed reaction is (S)-4-amino-5-oxopentanoate = 5-aminolevulinate. It participates in porphyrin-containing compound metabolism; protoporphyrin-IX biosynthesis; 5-aminolevulinate from L-glutamyl-tRNA(Glu): step 2/2. This chain is Glutamate-1-semialdehyde 2,1-aminomutase, found in Desulfovibrio desulfuricans (strain ATCC 27774 / DSM 6949 / MB).